Here is a 458-residue protein sequence, read N- to C-terminus: Elongation factor 1-alpha (458 aa).

The residue at position 2 (G2) is a N,N,N-trimethylglycine. Position 3 is an N6,N6-dimethyllysine; alternate (K3). K3 carries the post-translational modification N6-methyllysine; alternate. One can recognise a tr-type G domain in the interval 5–240 (KTHVNVVVIG…DAIDPPQRPS (236 aa)). Positions 14–21 (GHVDSGKS) are G1. 14 to 21 (GHVDSGKS) serves as a coordination point for GTP. Position 30 is an N6-methyllysine (K30). The segment at 70–74 (GITID) is G2. An N6,N6,N6-trimethyllysine modification is found at K79. Residues 91–94 (DAPG) are G3. Residues 91 to 95 (DAPGH) and 153 to 156 (NKMD) contribute to the GTP site. The tract at residues 153-156 (NKMD) is G4. The segment at 192-194 (SGW) is G5. At K316 the chain carries N6,N6-dimethyllysine; alternate. K316 carries the post-translational modification N6-methyllysine; alternate. Position 390 is an N6-methyllysine (K390).

This sequence belongs to the TRAFAC class translation factor GTPase superfamily. Classic translation factor GTPase family. EF-Tu/EF-1A subfamily.

It is found in the cytoplasm. In terms of biological role, this protein promotes the GTP-dependent binding of aminoacyl-tRNA to the A-site of ribosomes during protein biosynthesis. This is Elongation factor 1-alpha (TEF-1) from Absidia glauca (Pin mould).